The sequence spans 304 residues: Meiotically up-regulated gene 86 protein (304 aa).

The segment covering methionine 1 to serine 12 has biased composition (low complexity). The tract at residues methionine 1 to phenylalanine 23 is disordered. The next 6 helical transmembrane spans lie at proline 93–valine 113, methionine 123–glutamate 143, phenylalanine 150–isoleucine 170, alanine 188–valine 208, leucine 212–phenylalanine 232, and valine 247–leucine 267.

This sequence belongs to the acetate uptake transporter (AceTr) (TC 2.A.96) family.

It localises to the endoplasmic reticulum membrane. It is found in the golgi apparatus. The protein localises to the golgi stack membrane. Its subcellular location is the vacuole membrane. Its function is as follows. Has a role in meiosis. This is Meiotically up-regulated gene 86 protein (mug86) from Schizosaccharomyces pombe (strain 972 / ATCC 24843) (Fission yeast).